Here is a 150-residue protein sequence, read N- to C-terminus: UPF0178 protein BamMC406_1579 (150 aa).

It belongs to the UPF0178 family.

The sequence is that of UPF0178 protein BamMC406_1579 from Burkholderia ambifaria (strain MC40-6).